Consider the following 340-residue polypeptide: Phospho-N-acetylmuramoyl-pentapeptide-transferase (340 aa).

The next 10 helical transmembrane spans lie at 3–23 (MSLI…PHFI), 53–73 (GGTV…FHVF), 79–99 (AYGA…IGFL), 119–139 (MALQ…PSGT), 144–164 (IGGL…FWIV), 176–196 (IDGL…IIAF), 200–220 (ELAI…FFVF), 227–247 (VFMG…ISIA), 250–270 (VEWT…SVML), and 315–335 (VDAF…WMVL).

This sequence belongs to the glycosyltransferase 4 family. MraY subfamily. Mg(2+) is required as a cofactor.

The protein resides in the cell membrane. It catalyses the reaction UDP-N-acetyl-alpha-D-muramoyl-L-alanyl-gamma-D-glutamyl-L-lysyl-D-alanyl-D-alanine + di-trans,octa-cis-undecaprenyl phosphate = Mur2Ac(oyl-L-Ala-gamma-D-Glu-L-Lys-D-Ala-D-Ala)-di-trans,octa-cis-undecaprenyl diphosphate + UMP. It functions in the pathway cell wall biogenesis; peptidoglycan biosynthesis. Functionally, catalyzes the initial step of the lipid cycle reactions in the biosynthesis of the cell wall peptidoglycan: transfers peptidoglycan precursor phospho-MurNAc-pentapeptide from UDP-MurNAc-pentapeptide onto the lipid carrier undecaprenyl phosphate, yielding undecaprenyl-pyrophosphoryl-MurNAc-pentapeptide, known as lipid I. The polypeptide is Phospho-N-acetylmuramoyl-pentapeptide-transferase (Streptococcus thermophilus (strain ATCC BAA-250 / LMG 18311)).